Here is a 394-residue protein sequence, read N- to C-terminus: MAKAKFERTKPHVNIGTIGHVDHGKTSLTAAITIILAKTGGAKATAYDQIDAAPEEKERGITISTAHVEYETQNRHYAHVDCPGHADYVKNMITGAAQMDGAILVVSAADGPMPQTREHILLAKQVGVPAMVVFLNKVDMVDDPDLLELVEMEVRELLSKYGFPGNEIPIIKGSALQALEGKPEGEKAINELMNAVDSYIPQPIRATDKPFLMPIEDVFSISGRGTVVTGRVESGIIKVGEEIEIVGLKNTQKTTCTGVEMFRKLLDEGQSGDNVGILLRGTKREEVERGQVLAKPGSIKPHDKFEAEVYVLSKEEGGRHTPFTNDYRPQFYFRTTDVTGTIKLPSDKQMVMPGDNATFSVELIKPIAMQEGLKFSIREGGRTVGAGIVTKINN.

The 195-residue stretch at 10–204 (KPHVNIGTIG…AVDSYIPQPI (195 aa)) folds into the tr-type G domain. Positions 19–26 (GHVDHGKT) are G1. Residue 19–26 (GHVDHGKT) participates in GTP binding. Residue threonine 26 participates in Mg(2+) binding. The interval 60–64 (GITIS) is G2. Residues 81–84 (DCPG) form a G3 region. GTP is bound by residues 81 to 85 (DCPGH) and 136 to 139 (NKVD). The tract at residues 136 to 139 (NKVD) is G4. Positions 174-176 (SAL) are G5.

This sequence belongs to the TRAFAC class translation factor GTPase superfamily. Classic translation factor GTPase family. EF-Tu/EF-1A subfamily. In terms of assembly, monomer.

The protein resides in the cytoplasm. It carries out the reaction GTP + H2O = GDP + phosphate + H(+). GTP hydrolase that promotes the GTP-dependent binding of aminoacyl-tRNA to the A-site of ribosomes during protein biosynthesis. This Rickettsia prowazekii (strain Madrid E) protein is Elongation factor Tu.